The following is a 224-amino-acid chain: uncharacterized protein (224 aa).

3 N-linked (GlcNAc...) asparagine glycosylation sites follow: Asn10, Asn70, and Asn74.

The protein localises to the endoplasmic reticulum. This is an uncharacterized protein from Saccharomyces cerevisiae (strain ATCC 204508 / S288c) (Baker's yeast).